Here is a 368-residue protein sequence, read N- to C-terminus: Chorismate synthase (368 aa).

NADP(+) is bound at residue R46. FMN-binding positions include 123 to 125 (RSS), 240 to 241 (NA), G285, 300 to 304 (KPTPT), and R326.

This sequence belongs to the chorismate synthase family. In terms of assembly, homotetramer. FMNH2 is required as a cofactor.

It carries out the reaction 5-O-(1-carboxyvinyl)-3-phosphoshikimate = chorismate + phosphate. It participates in metabolic intermediate biosynthesis; chorismate biosynthesis; chorismate from D-erythrose 4-phosphate and phosphoenolpyruvate: step 7/7. Catalyzes the anti-1,4-elimination of the C-3 phosphate and the C-6 proR hydrogen from 5-enolpyruvylshikimate-3-phosphate (EPSP) to yield chorismate, which is the branch point compound that serves as the starting substrate for the three terminal pathways of aromatic amino acid biosynthesis. This reaction introduces a second double bond into the aromatic ring system. The sequence is that of Chorismate synthase from Porphyromonas gingivalis (strain ATCC BAA-308 / W83).